Reading from the N-terminus, the 594-residue chain is Solute carrier family 22 member 14 (594 aa).

The Cytoplasmic segment spans residues 1–70 (MAGEENFKEE…EFGTFQQRLV (70 aa)). Residues 71–91 (ALTFIPSIMSAFFMFADHFVF) traverse the membrane as a helical segment. Over 92–184 (TAQKPYCNTS…LVCGMETKKD (93 aa)) the chain is Extracellular. N-linked (GlcNAc...) asparagine glycans are attached at residues Asn-99, Asn-117, Asn-125, and Asn-150. Residues 185–205 (TAQIMFMAGLPIGSLIFRLIT) form a helical membrane-spanning segment. Topologically, residues 206-210 (DKMGR) are cytoplasmic. A helical transmembrane segment spans residues 211 to 231 (YPAILLSLLGLIIFGFGTAFM). Residues 232-235 (NSFH) are Extracellular-facing. A helical transmembrane segment spans residues 236-256 (LYLFFRFGISQSVVGYAISSI). At 257-270 (SLATEWLVGEHRAH) the chain is on the cytoplasmic side. The helical transmembrane segment at 271–291 (AIILGHCFFAVGAVLLTGIAY) threads the bilayer. Topologically, residues 292–297 (SLPHWQ) are extracellular. A helical transmembrane segment spans residues 298–318 (LLFLVGGILVIPFISYIWILP). Residues 319 to 379 (ESPRWLMMKG…DFCKNRQLCK (61 aa)) are Cytoplasmic-facing. Residues 380 to 400 (VTLVMSCVWFTVSYTYFTLSL) form a helical membrane-spanning segment. At 401–408 (RMRELGVS) the chain is on the extracellular side. The chain crosses the membrane as a helical span at residues 409-431 (VHFRHVVPSIMEVPARLCCIFLL). Residues 432-437 (QQIGRK) are Cytoplasmic-facing. Residues 438–458 (WSLAVTLLQAIIWCLLLLFLP) traverse the membrane as a helical segment. Topologically, residues 459–488 (EGEDGLRLKWPRCPATELKSMTILVLMLRE) are extracellular. A helical transmembrane segment spans residues 489 to 509 (FSLAATVTVFFLYTAELLPTV). Residues 510-512 (LRA) are Cytoplasmic-facing. Residues 513–533 (TGLGLVSLASVAGAILSLTII) traverse the membrane as a helical segment. The Extracellular portion of the chain corresponds to 534-538 (SQTPS). The chain crosses the membrane as a helical span at residues 539–559 (LLPIFLCCVLAIVAFSLSSLL). The Cytoplasmic segment spans residues 560–594 (PETRDQPLSESLNHSSQIRNKVKDMKTKETSSDDV). Residues 566–594 (PLSESLNHSSQIRNKVKDMKTKETSSDDV) form a disordered region. The segment covering 567–578 (LSESLNHSSQIR) has biased composition (polar residues). Residues 580–594 (KVKDMKTKETSSDDV) are compositionally biased toward basic and acidic residues.

This sequence belongs to the major facilitator (TC 2.A.1) superfamily. Organic cation transporter (TC 2.A.1.19) family. Ubiquitous.

The protein localises to the mitochondrion inner membrane. The protein resides in the cell projection. Its subcellular location is the cilium. It is found in the flagellum membrane. It carries out the reaction riboflavin(in) = riboflavin(out). Riboflavin transporter localized at the inner mitochondrial membrane of the spermatozoa midpiece, which is required for male fertility. SLC22A14-mediated riboflavin transport is essential for spermatozoa energy generation and motility: riboflavin is the precursor of FMN and FAD, which are coenzymes of many enzymes in the TCA cycle (the citric acid cycle) in mitochondria. Required for sperm motility and normal sperm flagellar structure. This is Solute carrier family 22 member 14 from Homo sapiens (Human).